The chain runs to 434 residues: Gamma-glutamyl phosphate reductase (434 aa).

Belongs to the gamma-glutamyl phosphate reductase family.

It localises to the cytoplasm. The catalysed reaction is L-glutamate 5-semialdehyde + phosphate + NADP(+) = L-glutamyl 5-phosphate + NADPH + H(+). The protein operates within amino-acid biosynthesis; L-proline biosynthesis; L-glutamate 5-semialdehyde from L-glutamate: step 2/2. Its function is as follows. Catalyzes the NADPH-dependent reduction of L-glutamate 5-phosphate into L-glutamate 5-semialdehyde and phosphate. The product spontaneously undergoes cyclization to form 1-pyrroline-5-carboxylate. In Rhodopirellula baltica (strain DSM 10527 / NCIMB 13988 / SH1), this protein is Gamma-glutamyl phosphate reductase.